Reading from the N-terminus, the 214-residue chain is Large ribosomal subunit protein uL3 (214 aa).

Residues 129 to 157 (FGRGPMSHGSKNHRRPGSIGAGTTPGRVF) are disordered.

The protein belongs to the universal ribosomal protein uL3 family. In terms of assembly, part of the 50S ribosomal subunit. Forms a cluster with proteins L14 and L19.

Its function is as follows. One of the primary rRNA binding proteins, it binds directly near the 3'-end of the 23S rRNA, where it nucleates assembly of the 50S subunit. The protein is Large ribosomal subunit protein uL3 of Synechococcus sp. (strain JA-2-3B'a(2-13)) (Cyanobacteria bacterium Yellowstone B-Prime).